The primary structure comprises 1579 residues: DNA-directed RNA polymerase subunit beta' (1579 aa).

4 residues coordinate Zn(2+): Cys65, Cys67, Cys80, and Cys83. Positions 601, 603, and 605 each coordinate Mg(2+). Zn(2+) contacts are provided by Cys938, Cys1012, Cys1019, and Cys1022.

This sequence belongs to the RNA polymerase beta' chain family. The RNAP catalytic core consists of 2 alpha, 1 beta, 1 beta' and 1 omega subunit. When a sigma factor is associated with the core the holoenzyme is formed, which can initiate transcription. Mg(2+) serves as cofactor. Zn(2+) is required as a cofactor.

The enzyme catalyses RNA(n) + a ribonucleoside 5'-triphosphate = RNA(n+1) + diphosphate. In terms of biological role, DNA-dependent RNA polymerase catalyzes the transcription of DNA into RNA using the four ribonucleoside triphosphates as substrates. The polypeptide is DNA-directed RNA polymerase subunit beta' (Sulfurihydrogenibium sp. (strain YO3AOP1)).